Here is a 147-residue protein sequence, read N- to C-terminus: Siroheme decarboxylase NirG subunit (147 aa).

Belongs to the Ahb/Nir family. As to quaternary structure, probably forms a complex composed of NirD, NirL, NirG and NirH. All proteins are required for the total conversion of siroheme to didecarboxysiroheme.

The catalysed reaction is siroheme + 2 H(+) = 12,18-didecarboxysiroheme + 2 CO2. The protein operates within porphyrin-containing compound metabolism. Involved in heme d1 biosynthesis. Catalyzes the decarboxylation of siroheme into didecarboxysiroheme. The sequence is that of Siroheme decarboxylase NirG subunit from Pseudomonas aeruginosa (strain ATCC 15692 / DSM 22644 / CIP 104116 / JCM 14847 / LMG 12228 / 1C / PRS 101 / PAO1).